A 591-amino-acid polypeptide reads, in one-letter code: Pyruvate kinase 2 (591 aa).

Residue R38 participates in substrate binding. N40, S42, and D72 together coordinate K(+). 40–43 (NFSH) serves as a coordination point for ATP. The ATP site is built by R79 and K164. E229 provides a ligand contact to Mg(2+). Substrate is bound by residues G252, D253, and T285. D253 serves as a coordination point for Mg(2+).

It belongs to the pyruvate kinase family. In the C-terminal section; belongs to the PEP-utilizing enzyme family. Homotetramer. Requires Mg(2+) as cofactor. The cofactor is K(+).

It carries out the reaction pyruvate + ATP = phosphoenolpyruvate + ADP + H(+). The protein operates within carbohydrate degradation; glycolysis; pyruvate from D-glyceraldehyde 3-phosphate: step 5/5. This is Pyruvate kinase 2 (pyk2) from Synechocystis sp. (strain ATCC 27184 / PCC 6803 / Kazusa).